The chain runs to 302 residues: MKVGIIMGGISSEREVSLASGESIFNHIDKEKYEVSKIIINNKIDILEKVKGLDFALLALHGKFGEDGTVQAFLDIMDIPYSGCGALSSSLCMDKNLSKKVLKAENIRTAKWITVKSIEEIDYEKIEEIGYPVFVKPNNGGSSVATFKVYKKEDIKNSVMEGLKYDEEVIIESFIKGREITCPIFNGELFPILEIKSKADFYDYKQKYAANGAEHLPVQLEKSLYDEVKEMALKTFEVLKCEVYARVDMIISEEGVPYILEVNTLPGMTATSLFPQSAESRGISYSKFIDLIIETSLNKKIK.

The 196-residue stretch at 99-294 (KKVLKAENIR…YSKFIDLIIE (196 aa)) folds into the ATP-grasp domain. 126 to 181 (IEEIGYPVFVKPNNGGSSVATFKVYKKEDIKNSVMEGLKYDEEVIIESFIKGREIT) provides a ligand contact to ATP. Mg(2+) contacts are provided by aspartate 248, glutamate 261, and asparagine 263.

This sequence belongs to the D-alanine--D-alanine ligase family. Requires Mg(2+) as cofactor. It depends on Mn(2+) as a cofactor.

It localises to the cytoplasm. It catalyses the reaction 2 D-alanine + ATP = D-alanyl-D-alanine + ADP + phosphate + H(+). The protein operates within cell wall biogenesis; peptidoglycan biosynthesis. Its function is as follows. Cell wall formation. This Clostridium perfringens (strain 13 / Type A) protein is D-alanine--D-alanine ligase B.